The sequence spans 178 residues: Protein GrpE (178 aa).

Residues 1–26 (MQDQDKYAEQAASMEEPASADAPAIV) are disordered.

Belongs to the GrpE family. As to quaternary structure, homodimer.

Its subcellular location is the cytoplasm. Its function is as follows. Participates actively in the response to hyperosmotic and heat shock by preventing the aggregation of stress-denatured proteins, in association with DnaK and GrpE. It is the nucleotide exchange factor for DnaK and may function as a thermosensor. Unfolded proteins bind initially to DnaJ; upon interaction with the DnaJ-bound protein, DnaK hydrolyzes its bound ATP, resulting in the formation of a stable complex. GrpE releases ADP from DnaK; ATP binding to DnaK triggers the release of the substrate protein, thus completing the reaction cycle. Several rounds of ATP-dependent interactions between DnaJ, DnaK and GrpE are required for fully efficient folding. This Herminiimonas arsenicoxydans protein is Protein GrpE.